The primary structure comprises 116 residues: NADH-ubiquinone oxidoreductase chain 3 (116 aa).

The next 3 membrane-spanning stretches (helical) occupy residues Leu3–Phe23, Phe56–Leu76, and Leu87–Trp107.

It belongs to the complex I subunit 3 family.

Its subcellular location is the mitochondrion membrane. The enzyme catalyses a ubiquinone + NADH + 5 H(+)(in) = a ubiquinol + NAD(+) + 4 H(+)(out). Core subunit of the mitochondrial membrane respiratory chain NADH dehydrogenase (Complex I) that is believed to belong to the minimal assembly required for catalysis. Complex I functions in the transfer of electrons from NADH to the respiratory chain. The immediate electron acceptor for the enzyme is believed to be ubiquinone. This is NADH-ubiquinone oxidoreductase chain 3 (MT-ND3) from Oncorhynchus tshawytscha (Chinook salmon).